Consider the following 248-residue polypeptide: Prepilin leader peptidase/N-methyltransferase (248 aa).

A helical transmembrane segment spans residues Met1 to Cys21. Residues Cys36, Cys39, Cys61, and Cys64 each coordinate Zn(2+). Transmembrane regions (helical) follow at residues Ile68–Ile88, Phe90–Ala110, Ile114–Ala134, Trp143–Ile163, Val178–Ile198, and Ala223–Ile243.

The protein belongs to the peptidase A24 family. The cofactor is Zn(2+).

It localises to the cell membrane. The enzyme catalyses Typically cleaves a -Gly-|-Phe- bond to release an N-terminal, basic peptide of 5-8 residues from type IV prepilin, and then N-methylates the new N-terminal amino group, the methyl donor being S-adenosyl-L-methionine.. Functionally, plays a role in type II pseudopili formation by proteolytically removing the leader sequence from substrate proteins and subsequently monomethylating the alpha-amino group of the newly exposed N-terminal phenylalanine. Substrates include proteins required for biogenesis of the type II general secretory apparatus. The chain is Prepilin leader peptidase/N-methyltransferase (comC) from Bacillus subtilis (strain 168).